A 481-amino-acid chain; its full sequence is Serine/threonine-protein kinase US3 (481 aa).

The disordered stretch occupies residues 12–63 (RPDKRQEASVPPETNTAPAFPASTFYTPAEDAYLAPGPPETIHPSRPPSPGE). The span at 47-61 (PGPPETIHPSRPPSP) shows a compositional bias: pro residues. The region spanning 191–478 (FAIHGALIPG…AAELLRLPLF (288 aa)) is the Protein kinase domain. ATP-binding positions include 197 to 205 (LIPGSEGCV) and K220. Residue D305 is the Proton acceptor of the active site.

Belongs to the protein kinase superfamily. Ser/Thr protein kinase family. In terms of assembly, interacts with host LAT; this interaction prevents LAT activation of TRAF6. Post-translationally, phosphorylated by UL13; this phosphorylation regulates subsequent phosphorylation of UL31 and UL34 by US3. Autophosphorylated.

The protein localises to the host cytoplasm. Its subcellular location is the host nucleus. It carries out the reaction L-seryl-[protein] + ATP = O-phospho-L-seryl-[protein] + ADP + H(+). It catalyses the reaction L-threonyl-[protein] + ATP = O-phospho-L-threonyl-[protein] + ADP + H(+). Multifunctional serine/threonine kinase that plays a role in several processes including egress of virus particles from the nucleus, modulation of the actin cytoskeleton and inhibition of host immune response. Phosphorylates UL31 and UL34, two critical regulators of capsid budding from nucleus to endoplasmic reticulum, thereby facilitating virion egress. Modulates and redistributes host components of the nuclear envelope, including LMNA, emerin/EMD and the nuclear matrix protein MATR3. In turn, facilitates nuclear pore impairment and capsid release through impaired nuclear envelope. Phosphorylates envelope glycoprotein B (gB), probably to direct it to the cell surface. Promotes virus intracellular spread by restructuring host cell cytoskeleton. Blocks host apoptosis to extend cell survival and allow efficient viral replication. Promotes viral gene expression by phosphorylating host HDAC2 to reduce viral genome silencing. Strongly inhibits TCR-activated signal transduction in T-cells by reducing the ubiquitination of LAT and TRAF6, leading to a suboptimal activation of LAT. Subverts host antiviral innate immunity by inhibiting type I interferon production through hyperphosphorylation of beta-catenin/CTNNB1. In addition, phosphorylates the RNA sensor RIGI and the transcription factor IRF3 to prevent the RLR-mediated antiviral signaling pathway. Hyperphosphorylates host RELA and thereby dampens NF-kappa-B signaling. Acts as an immunoevasin partly responsible for inhibition of MR1 expression and antigen presentation in response to bacterial infection. This Human herpesvirus 2 (strain HG52) (HHV-2) protein is Serine/threonine-protein kinase US3 (US3).